A 253-amino-acid chain; its full sequence is Sulfate transporter CysZ (253 aa).

Helical transmembrane passes span 31-51, 75-95, 151-171, and 222-242; these read FVILPLLVNILLMGGAFWWLF, LLWPLAVISVLLVFGYFFSTI, IVLLIIYFIPGIGQTVAPVLW, and IPLLNLFIMPVAVCGATAMWV.

This sequence belongs to the CysZ family.

It localises to the cell inner membrane. In terms of biological role, high affinity, high specificity proton-dependent sulfate transporter, which mediates sulfate uptake. Provides the sulfur source for the cysteine synthesis pathway. The protein is Sulfate transporter CysZ of Escherichia coli O139:H28 (strain E24377A / ETEC).